The primary structure comprises 574 residues: Tyrosinase (574 aa).

Positions 67, 95, 104, 275, 279, and 304 each coordinate Cu cation. The 2'-(S-cysteinyl)-histidine (Cys-His) cross-link spans 93-95 (CTH).

Belongs to the tyrosinase family. The cofactor is Cu(2+).

It catalyses the reaction 2 L-dopa + O2 = 2 L-dopaquinone + 2 H2O. It carries out the reaction L-tyrosine + O2 = L-dopaquinone + H2O. Its function is as follows. This is a copper-containing oxidase that functions in the formation of pigments such as melanins and other polyphenolic compounds. The polypeptide is Tyrosinase (TYR) (Podospora anserina (Pleurage anserina)).